The sequence spans 245 residues: Tetraspanin-6 (245 aa).

At 1-19 the chain is on the cytoplasmic side; it reads MASPSRRLQTKPVITCFKS. Residues 20–40 traverse the membrane as a helical segment; it reads VLLIYTFIFWITGVILLAVGI. Over 41–59 the chain is Extracellular; it reads WGKVSLENYFSLLNEKATN. Residues 60–80 form a helical membrane-spanning segment; it reads VPFVLIATGTVIILLGTFGCF. The Cytoplasmic segment spans residues 81-93; sequence ATCRASAWMLKLY. The helical transmembrane segment at 94–114 threads the bilayer; it reads AMFLTLVFLVELVAAIVGFVF. Residues 115-208 are Extracellular-facing; sequence RHEIKNSFKN…IKVMTIIESE (94 aa). Asparagine 134 carries an N-linked (GlcNAc...) asparagine glycan. A helical membrane pass occupies residues 209–229; it reads MGVVAGISFGVACFQLIGIFL. At 230 to 245 the chain is on the cytoplasmic side; it reads AYCLSRAITNNQYEIV.

This sequence belongs to the tetraspanin (TM4SF) family.

It localises to the membrane. The chain is Tetraspanin-6 (TSPAN6) from Homo sapiens (Human).